The sequence spans 25 residues: Gastrin-releasing peptide (25 aa).

Methionine 25 bears the Methionine amide mark.

This sequence belongs to the bombesin/neuromedin-B/ranatensin family.

It localises to the secreted. Its subcellular location is the cytoplasmic vesicle. It is found in the secretory vesicle lumen. In terms of biological role, stimulates the release of gastrin and other gastrointestinal hormones. The chain is Gastrin-releasing peptide (grp) from Scyliorhinus canicula (Small-spotted catshark).